Reading from the N-terminus, the 356-residue chain is Dual-specificity RNA methyltransferase RlmN (356 aa).

Catalysis depends on Glu-89, which acts as the Proton acceptor. A Radical SAM core domain is found at 108–341; it reads SHARYTICVS…CTIRESKGLD (234 aa). Cys-115 and Cys-346 are joined by a disulfide. Positions 122, 126, and 129 each coordinate [4Fe-4S] cluster. Residues 172–173, Ser-204, 227–229, and Asn-303 each bind S-adenosyl-L-methionine; these read GE and SLH. Cys-346 serves as the catalytic S-methylcysteine intermediate.

Belongs to the radical SAM superfamily. RlmN family. [4Fe-4S] cluster is required as a cofactor.

It localises to the cytoplasm. The enzyme catalyses adenosine(2503) in 23S rRNA + 2 reduced [2Fe-2S]-[ferredoxin] + 2 S-adenosyl-L-methionine = 2-methyladenosine(2503) in 23S rRNA + 5'-deoxyadenosine + L-methionine + 2 oxidized [2Fe-2S]-[ferredoxin] + S-adenosyl-L-homocysteine. It catalyses the reaction adenosine(37) in tRNA + 2 reduced [2Fe-2S]-[ferredoxin] + 2 S-adenosyl-L-methionine = 2-methyladenosine(37) in tRNA + 5'-deoxyadenosine + L-methionine + 2 oxidized [2Fe-2S]-[ferredoxin] + S-adenosyl-L-homocysteine. Specifically methylates position 2 of adenine 2503 in 23S rRNA and position 2 of adenine 37 in tRNAs. m2A2503 modification seems to play a crucial role in the proofreading step occurring at the peptidyl transferase center and thus would serve to optimize ribosomal fidelity. The polypeptide is Dual-specificity RNA methyltransferase RlmN (Campylobacter jejuni subsp. jejuni serotype O:23/36 (strain 81-176)).